The sequence spans 990 residues: Nucleotide-binding leucine-rich repeat (NLR)-like protein (990 aa).

The tract at residues 22 to 304 (GWICAIPTEL…AVAAAYAKIL (283 aa)) is purine nucleoside phosphorylase domain. The NB-ARC domain occupies 334–563 (REEHLRQVLT…TISNYLEVYE (230 aa)). TPR repeat units lie at residues 732 to 765 (RDLL…KKLA), 774 to 807 (IGSM…MKQV), 816 to 849 (LGSM…RKQA), 858 to 891 (LMSM…KQQT), 900 to 933 (LASM…RKQV), and 942 to 975 (LQSM…ATLD). Positions 965 to 990 (QQQQQSQATLDEGRLSKPARKRRKKK) are disordered. A compositionally biased stretch (basic residues) spans 981-990 (KPARKRRKKK).

It catalyses the reaction ATP + H2O = D-ribose 5-triphosphate + adenine. The catalysed reaction is dATP + H2O = 2-deoxyribose 5-triphosphate + adenine. Its function is as follows. The N-terminal purine nucleoside phosphorylase (PNP) domain cleaves the N-glycosidic bond of ATP, and to a lesser extent dATP; has very weak activity on adenosine and deoxyadenosine and no activity on (d)ADP or (d)AMP. This Hyaloscypha variabilis (strain UAMH 11265 / GT02V1 / F) (Meliniomyces variabilis) protein is Nucleotide-binding leucine-rich repeat (NLR)-like protein.